The primary structure comprises 221 residues: Phosphoribosylformylglycinamidine synthase subunit PurQ (221 aa).

The 219-residue stretch at 3 to 221 (AAVLVFPGSN…MFASLMQVMA (219 aa)) folds into the Glutamine amidotransferase type-1 domain. Cys87 (nucleophile) is an active-site residue. Residues His195 and Glu197 contribute to the active site.

Part of the FGAM synthase complex composed of 1 PurL, 1 PurQ and 2 PurS subunits.

The protein resides in the cytoplasm. The catalysed reaction is N(2)-formyl-N(1)-(5-phospho-beta-D-ribosyl)glycinamide + L-glutamine + ATP + H2O = 2-formamido-N(1)-(5-O-phospho-beta-D-ribosyl)acetamidine + L-glutamate + ADP + phosphate + H(+). It catalyses the reaction L-glutamine + H2O = L-glutamate + NH4(+). The protein operates within purine metabolism; IMP biosynthesis via de novo pathway; 5-amino-1-(5-phospho-D-ribosyl)imidazole from N(2)-formyl-N(1)-(5-phospho-D-ribosyl)glycinamide: step 1/2. Part of the phosphoribosylformylglycinamidine synthase complex involved in the purines biosynthetic pathway. Catalyzes the ATP-dependent conversion of formylglycinamide ribonucleotide (FGAR) and glutamine to yield formylglycinamidine ribonucleotide (FGAM) and glutamate. The FGAM synthase complex is composed of three subunits. PurQ produces an ammonia molecule by converting glutamine to glutamate. PurL transfers the ammonia molecule to FGAR to form FGAM in an ATP-dependent manner. PurS interacts with PurQ and PurL and is thought to assist in the transfer of the ammonia molecule from PurQ to PurL. This Zymomonas mobilis subsp. mobilis (strain ATCC 31821 / ZM4 / CP4) protein is Phosphoribosylformylglycinamidine synthase subunit PurQ.